Here is a 415-residue protein sequence, read N- to C-terminus: U-box domain-containing protein 29 (415 aa).

One can recognise a U-box domain in the interval 11-85 (TVPSFFKCPI…NIWSDSIGRR (75 aa)). 2 ARM repeats span residues 221–263 (KSKL…TISK) and 265–307 (KRVR…TLSS).

In terms of assembly, binds to SD129 and SD25.

It catalyses the reaction S-ubiquitinyl-[E2 ubiquitin-conjugating enzyme]-L-cysteine + [acceptor protein]-L-lysine = [E2 ubiquitin-conjugating enzyme]-L-cysteine + N(6)-ubiquitinyl-[acceptor protein]-L-lysine.. It participates in protein modification; protein ubiquitination. Its function is as follows. Functions as an E3 ubiquitin ligase. The sequence is that of U-box domain-containing protein 29 (PUB29) from Arabidopsis thaliana (Mouse-ear cress).